The chain runs to 780 residues: GATOR2 complex protein WDR24 (780 aa).

WD repeat units lie at residues 67–107 (SLNF…RNKQ), 113–153 (EHKR…SVST), 156–196 (GQSE…RCER), 200–240 (AHNG…AKEI), 244–286 (QTIA…IPFA), and 290–333 (EHKD…IDRA). A C4-type zinc finger spans residues 708 to 730 (NCSNCKRPMSNKGWICDRCRQCA). Positions 709, 712, 723, 726, 733, 736, 747, 750, 752, 755, 758, 769, 773, 775, and 777 each coordinate Zn(2+). The segment at 731–780 (SMCAVCHHVVKGLFVWCQGCCHGGHLQHIMNWMQNNCYCPAGCGHVCEYS) adopts an RING-type; atypical zinc-finger fold.

This sequence belongs to the WD repeat WDR24 family. Component of the GATOR2 subcomplex, composed of MIOS, SEC13, SEH1L, WDR24 and WDR59. The GATOR2 complex interacts with CASTOR1 and CASTOR2; the interaction is negatively regulated by arginine. The GATOR2 complex interacts with SESN1, SESN2 and SESN3; the interaction is negatively regulated by amino acids.

Its subcellular location is the lysosome membrane. The catalysed reaction is S-ubiquitinyl-[E2 ubiquitin-conjugating enzyme]-L-cysteine + [acceptor protein]-L-lysine = [E2 ubiquitin-conjugating enzyme]-L-cysteine + N(6)-ubiquitinyl-[acceptor protein]-L-lysine.. It participates in protein modification; protein ubiquitination. The GATOR2 complex is negatively regulated by the upstream amino acid sensors CASTOR1 and SESN2, which sequester the GATOR2 complex in absence of amino acids. In the presence of abundant amino acids, GATOR2 is released from CASTOR1 and SESN2 and activated. In terms of biological role, catalytic component of the GATOR2 complex, a multiprotein complex that acts as an activator of the amino acid-sensing branch of the mTORC1 signaling pathway. The GATOR2 complex indirectly activates mTORC1 through the inhibition of the GATOR1 subcomplex. GATOR2 probably acts as an E3 ubiquitin-protein ligase toward GATOR1. In the presence of abundant amino acids, the GATOR2 complex mediates ubiquitination of the NPRL2 core component of the GATOR1 complex, leading to GATOR1 inactivation. In the absence of amino acids, GATOR2 is inhibited, activating the GATOR1 complex. In addition to its role in regulation of the mTORC1 complex, promotes the acidification of lysosomes and facilitates autophagic flux. Within the GATOR2 complex, WDR24 constitutes the catalytic subunit that mediates 'Lys-6'-linked ubiquitination of NPRL2. The sequence is that of GATOR2 complex protein WDR24 from Xenopus laevis (African clawed frog).